We begin with the raw amino-acid sequence, 211 residues long: Thymidine kinase (211 aa).

ATP-binding positions include 9 to 16 and 87 to 90; these read STMNAGKS and DEAQ. Glu-88 acts as the Proton acceptor in catalysis. Residues Cys-145, Cys-147, Cys-182, and His-185 each coordinate Zn(2+).

Belongs to the thymidine kinase family. In terms of assembly, homotetramer.

It localises to the cytoplasm. The enzyme catalyses thymidine + ATP = dTMP + ADP + H(+). This is Thymidine kinase from Rhodopirellula baltica (strain DSM 10527 / NCIMB 13988 / SH1).